The primary structure comprises 149 residues: Glycine cleavage system H protein (149 aa).

The 82-residue stretch at 23–104 (LIWVGISNHA…PYGIWLFKIN (82 aa)) folds into the Lipoyl-binding domain. Residue Lys64 is modified to N6-lipoyllysine.

The protein belongs to the GcvH family. In terms of assembly, the glycine cleavage system is composed of four proteins: P, T, L and H. It depends on (R)-lipoate as a cofactor.

Its function is as follows. The glycine cleavage system catalyzes the degradation of glycine. The H protein shuttles the methylamine group of glycine from the P protein to the T protein. The protein is Glycine cleavage system H protein of Polynucleobacter necessarius subsp. necessarius (strain STIR1).